Reading from the N-terminus, the 418-residue chain is Elongation factor 1-gamma 1 (418 aa).

Residues 1–82 (MALVLHTFDG…YVTRSKSDNP (82 aa)) form the GST N-terminal domain. In terms of domain architecture, GST C-terminal spans 87–213 (SLIEYAHIEQ…GDVKQADSVP (127 aa)). The disordered stretch occupies residues 211-265 (SVPQVQKKAAAPKEQKPKEAKKEAPKEAPKPKAAEKPEEEEEAPKPKPKNPLDLL). A compositionally biased stretch (basic and acidic residues) spans 221 to 246 (APKEQKPKEAKKEAPKEAPKPKAAEK). Positions 258-418 (PKNPLDLLPP…EALLDAKCFK (161 aa)) constitute an EF-1-gamma C-terminal domain.

EF-1 is composed of four subunits: alpha, beta, delta, and gamma.

Probably plays a role in anchoring the complex to other cellular components. The chain is Elongation factor 1-gamma 1 from Oryza sativa subsp. japonica (Rice).